The primary structure comprises 113 residues: NYLSKNDELRKGDSLVSNNGEFKAVFQDDANFVIYGWQPLWASDTYGSDAIRLCMQADCNLVMYNGSGQARWHTNTSKGDCNMCRLFLTNEGKLVLNKESTEIWNSDKNKGSK.

Positions 1-109 (NYLSKNDELR…STEIWNSDKN (109 aa)) constitute a Bulb-type lectin domain.

In terms of assembly, homotetramer. Interacts with alpha-1-beta-1 integrin (ITGA1/ITGB1). In terms of processing, not glycosylated. Not N-glycosylated and not O-glycosylated with the mostcommon O-linked glycoconjugates. Post-translationally, the N-terminus is blocked. As to expression, expressed by sting venom glands and is also found in skin mucus. Not found in other tissues tested.

It localises to the secreted. Its function is as follows. May contribute to some of the local and systemic effects of envenomation by the scorpionfish. Preferentially recognizes mannose-containing carbohydrate structures, but its interaction with single mannose residues is weak. Potently inhibits alpha-1-beta-1 integrin (ITGA1/ITGB1) binding to basement membrane collagen IV in a divalent cation-independent manner. In addition, moderately inhibits both laminin binding integrins alpha-3-beta-1 (ITGA3/ITGB1) and alpha-7-beta-1 (ITGA7/ITGB1). Weakens the cell-collagen contacts, reduces cell spreading, and alters the actin cytoskeleton, after the compensating alpha-2-beta-1 integrin is blocked. On the cellular level, fails to completely detach hepatocarcinoma HepG2 cells and primary arterial smooth muscle cells from the collagen IV fragment CB3. This Scorpaena plumieri (Spotted scorpionfish) protein is B-type lectin plumieribetin.